A 254-amino-acid chain; its full sequence is D-aminoacyl-tRNA deacylase (254 aa).

The interval Lys61 to Pro82 is disordered. Residues Thr65–Asp74 are compositionally biased toward polar residues.

This sequence belongs to the DtdA deacylase family. Monomer. Zn(2+) is required as a cofactor.

It carries out the reaction a D-aminoacyl-tRNA + H2O = a tRNA + a D-alpha-amino acid + H(+). It catalyses the reaction glycyl-tRNA(Ala) + H2O = tRNA(Ala) + glycine + H(+). Its function is as follows. D-aminoacyl-tRNA deacylase with broad substrate specificity. By recycling D-aminoacyl-tRNA to D-amino acids and free tRNA molecules, this enzyme counteracts the toxicity associated with the formation of D-aminoacyl-tRNA entities in vivo. The sequence is that of D-aminoacyl-tRNA deacylase from Methanococcus maripaludis (strain DSM 14266 / JCM 13030 / NBRC 101832 / S2 / LL).